We begin with the raw amino-acid sequence, 912 residues long: Protein translocase subunit SecA (912 aa).

Residues Gln-87, 105 to 109, and Asp-508 contribute to the ATP site; that span reads GEGKT. The interval 869–912 is disordered; sequence EQMQGGNAPVPVSQVTRDEPKVGRNDPCPCGSGKKYKHCHGQLS. The Zn(2+) site is built by Cys-896, Cys-898, Cys-907, and His-908. Over residues 902–912 the composition is skewed to basic residues; sequence KKYKHCHGQLS.

Belongs to the SecA family. As to quaternary structure, monomer and homodimer. Part of the essential Sec protein translocation apparatus which comprises SecA, SecYEG and auxiliary proteins SecDF-YajC and YidC. Zn(2+) serves as cofactor.

The protein localises to the cell inner membrane. Its subcellular location is the cytoplasm. The enzyme catalyses ATP + H2O + cellular proteinSide 1 = ADP + phosphate + cellular proteinSide 2.. In terms of biological role, part of the Sec protein translocase complex. Interacts with the SecYEG preprotein conducting channel. Has a central role in coupling the hydrolysis of ATP to the transfer of proteins into and across the cell membrane, serving both as a receptor for the preprotein-SecB complex and as an ATP-driven molecular motor driving the stepwise translocation of polypeptide chains across the membrane. In Xanthomonas axonopodis pv. citri (strain 306), this protein is Protein translocase subunit SecA.